The chain runs to 408 residues: Peptidase T (408 aa).

Position 78 (His78) interacts with Zn(2+). Asp80 is a catalytic residue. Residue Asp140 participates in Zn(2+) binding. Catalysis depends on Glu174, which acts as the Proton acceptor. Zn(2+) contacts are provided by Glu175, Asp197, and His379.

This sequence belongs to the peptidase M20B family. Zn(2+) is required as a cofactor.

It is found in the cytoplasm. It catalyses the reaction Release of the N-terminal residue from a tripeptide.. Cleaves the N-terminal amino acid of tripeptides. This Staphylococcus aureus (strain bovine RF122 / ET3-1) protein is Peptidase T.